The primary structure comprises 198 residues: Na(+)-translocating NADH-quinone reductase subunit E (198 aa).

6 helical membrane passes run 11–31, 35–55, 77–97, 110–130, 140–160, and 176–196; these read AVFIENMALSFFLGMCTFLAV, VSTAFGLGIAVTFVLGIAVPV, FLNFITFIGVIAGLVQILEMV, GIFLPLIAVNCAIFGGVSFMV, IVYGFGSGLGWMLAIVALAGL, and LGITFISVGLMALGFMSFSGI.

It belongs to the NqrDE/RnfAE family. Composed of six subunits; NqrA, NqrB, NqrC, NqrD, NqrE and NqrF.

Its subcellular location is the cell inner membrane. It carries out the reaction a ubiquinone + n Na(+)(in) + NADH + H(+) = a ubiquinol + n Na(+)(out) + NAD(+). Its function is as follows. NQR complex catalyzes the reduction of ubiquinone-1 to ubiquinol by two successive reactions, coupled with the transport of Na(+) ions from the cytoplasm to the periplasm. NqrA to NqrE are probably involved in the second step, the conversion of ubisemiquinone to ubiquinol. This Haemophilus influenzae (strain 86-028NP) protein is Na(+)-translocating NADH-quinone reductase subunit E.